We begin with the raw amino-acid sequence, 1939 residues long: Myosin-4 (1939 aa).

The Myosin N-terminal SH3-like domain occupies 33–82; it reads DAKSSVFVVDAKESYVKATVQSREGGKVTAKTEGGATVTVKDDQVFSMNP. Residue Ser36 is modified to Phosphoserine. 2 positions are modified to phosphothreonine: Thr64 and Thr69. Ser79 is modified (phosphoserine). Residues 86 to 782 form the Myosin motor domain; that stretch reads DKIEDMAMMT…LLGTLEEMRD (697 aa). Position 130 is an N6,N6,N6-trimethyllysine (Lys130). 179-186 serves as a coordination point for ATP; sequence GESGAGKT. Residue Tyr389 is modified to Phosphotyrosine. Phosphothreonine is present on Thr391. A Phosphoserine modification is found at Ser392. Thr419 bears the Phosphothreonine mark. Residue Tyr424 is modified to Phosphotyrosine. The residue at position 625 (Ser625) is a Phosphoserine. The actin-binding stretch occupies residues 659-681; it reads LNKLMTNLKSTHPHFVRCLIPNE. His757 carries the post-translational modification Pros-methylhistidine. Residues 761 to 775 are actin-binding; it reads KFGHTKVFFKAGLLG. Thr776 carries the post-translational modification Phosphothreonine. The 30-residue stretch at 785–814 folds into the IQ domain; it reads LAQLITRTQAVCRGYLMRVEFKKMMERRES. Positions 843–1939 form a coiled coil; it reads LLKSAETEKE…EVHTKVISEE (1097 aa). A phosphoserine mark is found at Ser1092 and Ser1096. 2 disordered regions span residues 1128–1147 and 1153–1172; these read AERA…SREL and RLEE…KKRE. Residues Ser1162 and Ser1237 each carry the phosphoserine modification. At Thr1241 the chain carries Phosphothreonine. Ser1243 carries the post-translational modification Phosphoserine. Thr1255 carries the post-translational modification Phosphothreonine. Ser1261 is modified (phosphoserine). Thr1265 carries the phosphothreonine modification. Positions 1276 to 1299 are disordered; it reads ELSTQKARLHTESGEFSRQLDEKD. Phosphoserine is present on Ser1278. Basic and acidic residues predominate over residues 1284–1299; that stretch reads LHTESGEFSRQLDEKD. Thr1286 is modified (phosphothreonine). Ser1288, Ser1292, Ser1303, Ser1306, and Ser1413 each carry phosphoserine. Position 1464 is a phosphotyrosine (Tyr1464). Thr1467 carries the post-translational modification Phosphothreonine. A Phosphoserine modification is found at Ser1474. A Phosphotyrosine modification is found at Tyr1492. Position 1495 is a phosphoserine (Ser1495). Thr1501 carries the post-translational modification Phosphothreonine. Position 1514 is a phosphoserine (Ser1514). A Phosphothreonine modification is found at Thr1517. Residues Ser1542, Ser1547, Ser1554, Ser1574, Ser1600, Ser1603, Ser1714, and Ser1726 each carry the phosphoserine modification. A phosphothreonine mark is found at Thr1730 and Thr1736. Ser1739 carries the phosphoserine modification.

It belongs to the TRAFAC class myosin-kinesin ATPase superfamily. Myosin family. In terms of assembly, muscle myosin is a hexameric protein that consists of 2 heavy chain subunits (MHC), 2 alkali light chain subunits (MLC) and 2 regulatory light chain subunits (MLC-2). In terms of tissue distribution, expressed in type 2b myofibers in the tibialis anterior muscle (at protein level).

It localises to the cytoplasm. It is found in the myofibril. Its function is as follows. Muscle contraction. This is Myosin-4 (Myh4) from Mus musculus (Mouse).